The following is a 511-amino-acid chain: Antagonist of mitotic exit network protein 1 (511 aa).

Disordered regions lie at residues Tyr27–Arg58 and Thr99–Trp119. Polar residues predominate over residues Ala45 to Arg58. Residues Thr99–Pro112 show a composition bias toward low complexity.

This sequence belongs to the AMN1 family.

The protein resides in the cytoplasm. It localises to the nucleus. Functionally, negative regulator of the mitotic exit network (MEN), required for multiple cell cycle checkpoints. Required for daughter cell separation and chromosome stability. Involved in copper sensitivity. This chain is Antagonist of mitotic exit network protein 1 (AMN1), found in Candida glabrata (strain ATCC 2001 / BCRC 20586 / JCM 3761 / NBRC 0622 / NRRL Y-65 / CBS 138) (Yeast).